The primary structure comprises 330 residues: Phenylalanine--tRNA ligase alpha subunit (330 aa).

Glutamate 246 is a binding site for Mg(2+).

Belongs to the class-II aminoacyl-tRNA synthetase family. Phe-tRNA synthetase alpha subunit type 1 subfamily. Tetramer of two alpha and two beta subunits. Mg(2+) is required as a cofactor.

The protein resides in the cytoplasm. It catalyses the reaction tRNA(Phe) + L-phenylalanine + ATP = L-phenylalanyl-tRNA(Phe) + AMP + diphosphate + H(+). The sequence is that of Phenylalanine--tRNA ligase alpha subunit from Wolinella succinogenes (strain ATCC 29543 / DSM 1740 / CCUG 13145 / JCM 31913 / LMG 7466 / NCTC 11488 / FDC 602W) (Vibrio succinogenes).